The primary structure comprises 334 residues: Atypical chemokine receptor 1 (334 aa).

At 1–61 (MGNCLYPVET…CNLLDRSSLP (61 aa)) the chain is on the extracellular side. N-linked (GlcNAc...) asparagine glycans are attached at residues Asn-16, Asn-26, and Asn-32. Disulfide bonds link Cys-49-Cys-274 and Cys-127-Cys-193. The chain crosses the membrane as a helical span at residues 62–82 (FFMLTSVLGMLASGSILFAIL). The Cytoplasmic segment spans residues 83-93 (RPFFHWQICPS). Residues 94-114 (WPILAELAVGSALFSIAVPIL) traverse the membrane as a helical segment. Topologically, residues 115–127 (APGLHSAHSTALC) are extracellular. A helical membrane pass occupies residues 128-151 (NLGYWVWYTSAFAQALLIGCYACL). Over 152-164 (NPRLNIGQLRGFT) the chain is Cytoplasmic. Residues 165-185 (LGLSVGLWGAAALSGLPVALA) traverse the membrane as a helical segment. The Extracellular portion of the chain corresponds to 186-205 (SDVYNGFCTFPSSRDMEALK). Residues 206–226 (YTHYAICFTIFTVLPLTLLAA) traverse the membrane as a helical segment. The Cytoplasmic portion of the chain corresponds to 227–242 (KGLKIALSKGPGPWVS). Residues 243–263 (VLWIWFIFWWPHGMVLIFDAL) traverse the membrane as a helical segment. Residues 264-285 (VRSKTVLLYTCQSQKILDAMLN) are Extracellular-facing. A glycan (N-linked (GlcNAc...) asparagine) is linked at Asn-285. A helical transmembrane segment spans residues 286–306 (VTEALSMLHCVATPLLLALFC). The Cytoplasmic segment spans residues 307-334 (HQTTRRSLSSLSLPTRQASQMDALAGKS).

It belongs to the G-protein coupled receptor 1 family. Atypical chemokine receptor subfamily. In terms of tissue distribution, expressed in liver and brain.

Its subcellular location is the early endosome. The protein localises to the recycling endosome. It localises to the membrane. Atypical chemokine receptor that controls chemokine levels and localization via high-affinity chemokine binding that is uncoupled from classic ligand-driven signal transduction cascades, resulting instead in chemokine sequestration, degradation, or transcytosis. Also known as interceptor (internalizing receptor) or chemokine-scavenging receptor or chemokine decoy receptor. Has a promiscuous chemokine-binding profile, interacting with inflammatory chemokines of both the CXC and the CC subfamilies but not with homeostatic chemokines. Acts as a receptor for chemokines including CCL2, CCL5, CCL7, CCL11, CCL13, CCL14, CCL17, CXCL5, CXCL6, IL8/CXCL8, CXCL11, GRO, RANTES, MCP-1 and TARC. May regulate chemokine bioavailability and, consequently, leukocyte recruitment through two distinct mechanisms: when expressed in endothelial cells, it sustains the abluminal to luminal transcytosis of tissue-derived chemokines and their subsequent presentation to circulating leukocytes; when expressed in erythrocytes, serves as blood reservoir of cognate chemokines but also as a chemokine sink, buffering potential surges in plasma chemokine levels. Functionally, (Microbial infection) Acts as a receptor for the malaria parasite Plasmodium yoelii in mature erythrocytes but not reticulocytes. In Mus musculus (Mouse), this protein is Atypical chemokine receptor 1 (Ackr1).